Consider the following 227-residue polypeptide: MMAAGAAVALALWLLLPAVGVGEAGPPPIQDGEFTFLLPAGRKQCFYQSAPANASLETEYQVIGGAGLDVDFTLESPQGVLLVSESRKADGVHTVEPTEAGDYRLCFDNSFSTISEKLVFFELIFDSFQDEEEVEGWAEAVEPEEMLDVKMEDIKESIETMRTRLERSIQMLTLLRAFEARDRNLQEDNLERVNFWSAANVAVLLLVAVLQVCTLKRFFHDKRPVPT.

The first 24 residues, 1 to 24 (MMAAGAAVALALWLLLPAVGVGEA), serve as a signal peptide directing secretion. Topologically, residues 25 to 194 (GPPPIQDGEF…LQEDNLERVN (170 aa)) are extracellular. One can recognise a GOLD domain in the interval 43-125 (KQCFYQSAPA…EKLVFFELIF (83 aa)). Residues 145-170 (EMLDVKMEDIKESIETMRTRLERSIQ) adopt a coiled-coil conformation. The chain crosses the membrane as a helical span at residues 195 to 215 (FWSAANVAVLLLVAVLQVCTL). At 216 to 227 (KRFFHDKRPVPT) the chain is on the cytoplasmic side. Residues 218–219 (FF) carry the COPII vesicle coat-binding motif. The COPI vesicle coat-binding signature appears at 218 to 227 (FFHDKRPVPT).

Belongs to the EMP24/GP25L family. Homodimer in endoplasmic reticulum, endoplasmic reticulum-Golgi intermediate compartment and cis-Golgi network. Interacts with IL1RL1. Interacts with RNF26; this interaction is important to modulate innate immune signaling through the cGAS-STING pathway. As to expression, widely expressed.

Its subcellular location is the cell membrane. It is found in the endoplasmic reticulum membrane. The protein resides in the golgi apparatus. The protein localises to the cis-Golgi network membrane. It localises to the endoplasmic reticulum-Golgi intermediate compartment membrane. Its function is as follows. Potential role in vesicular protein trafficking, mainly in the early secretory pathway. May act as a cargo receptor at the lumenal side for incorporation of secretory cargo molecules into transport vesicles and may be involved in vesicle coat formation at the cytoplasmic side. Plays a positive role in IL-33-mediated IL-8 and IL-6 production by interacting with interleukin-33 receptor IL1RL1. Plays also a role in the modulation of innate immune signaling through the cGAS-STING pathway by interacting with RNF26. This is Transmembrane emp24 domain-containing protein 1 (Tmed1) from Mus musculus (Mouse).